The chain runs to 2156 residues: Oxygen-regulated protein 1 (2156 aa).

Residues 1–19 (MSDTPSTGFSIIHPTSSEG) are compositionally biased toward polar residues. A disordered region spans residues 1 to 25 (MSDTPSTGFSIIHPTSSEGQVPPPR). 2 Doublecortin domains span residues 36–118 (KRIS…VDLD) and 154–233 (RSLV…GNYD). 4 disordered regions span residues 353–375 (VSKT…RTES), 666–686 (SSVA…SRYQ), 1438–1458 (DMEE…MTSS), and 1590–1621 (DWSD…TQEK).

In terms of assembly, interacts (via the doublecortin domains) with microtubules. Interacts with RP1L1. Interacts with MAK. As to expression, expressed in retina. Not expressed in heart, brain, placenta, lung, liver, skeletal muscle, kidney, spleen and pancreas.

Its subcellular location is the cytoplasm. It is found in the cytoskeleton. The protein localises to the cilium axoneme. The protein resides in the cell projection. It localises to the cilium. Its subcellular location is the photoreceptor outer segment. Its function is as follows. Microtubule-associated protein regulating the stability and length of the microtubule-based axoneme of photoreceptors. Required for the differentiation of photoreceptor cells, it plays a role in the organization of the outer segment of rod and cone photoreceptors ensuring the correct orientation and higher-order stacking of outer segment disks along the photoreceptor axoneme. This Homo sapiens (Human) protein is Oxygen-regulated protein 1 (RP1).